The chain runs to 329 residues: Oligopeptide transport ATP-binding protein AppF (329 aa).

The ABC transporter domain maps to Leu-10–Leu-261. Gly-53 to Ser-60 provides a ligand contact to ATP.

It belongs to the ABC transporter superfamily.

It is found in the cell membrane. In terms of biological role, this protein is a component of an oligopeptide permease, a binding protein-dependent transport system. This APP system can completely substitute for the OPP system in both sporulation and genetic competence, though, unlike OPP, is incapable of transporting tripeptides. Probably responsible for energy coupling to the transport system. This Bacillus subtilis (strain 168) protein is Oligopeptide transport ATP-binding protein AppF (appF).